Consider the following 376-residue polypeptide: Carbamoyl phosphate synthase small chain (376 aa).

The segment at 1 to 181 (MSKAVLVLED…VEPDGPPGVS (181 aa)) is nucleophile. The tract at residues 1-183 (MSKAVLVLED…PDGPPGVSRF (183 aa)) is CPSase. Residues Ser46, Gly232, Gly234, Phe261, Gln264, Asn302, Gly304, and Phe305 each coordinate L-glutamine. The Glutamine amidotransferase type-1 domain maps to 184-376 (TVAALDLGIK…FVELMAGEGR (193 aa)). Active-site residues include His350 and Glu352.

Belongs to the CarA family. In terms of assembly, composed of two chains; the small (or glutamine) chain promotes the hydrolysis of glutamine to ammonia, which is used by the large (or ammonia) chain to synthesize carbamoyl phosphate. Tetramer of heterodimers (alpha,beta)4.

It carries out the reaction hydrogencarbonate + L-glutamine + 2 ATP + H2O = carbamoyl phosphate + L-glutamate + 2 ADP + phosphate + 2 H(+). The enzyme catalyses L-glutamine + H2O = L-glutamate + NH4(+). It functions in the pathway amino-acid biosynthesis; L-arginine biosynthesis; carbamoyl phosphate from bicarbonate: step 1/1. It participates in pyrimidine metabolism; UMP biosynthesis via de novo pathway; (S)-dihydroorotate from bicarbonate: step 1/3. Functionally, small subunit of the glutamine-dependent carbamoyl phosphate synthetase (CPSase). CPSase catalyzes the formation of carbamoyl phosphate from the ammonia moiety of glutamine, carbonate, and phosphate donated by ATP, constituting the first step of 2 biosynthetic pathways, one leading to arginine and/or urea and the other to pyrimidine nucleotides. The small subunit (glutamine amidotransferase) binds and cleaves glutamine to supply the large subunit with the substrate ammonia. This chain is Carbamoyl phosphate synthase small chain, found in Mycobacterium tuberculosis (strain CDC 1551 / Oshkosh).